The chain runs to 263 residues: Glucosamine-6-phosphate deaminase (263 aa).

The active-site Proton acceptor; for enolization step is Asp-67. The active-site For ring-opening step is the Asn-136. His-138 functions as the Proton acceptor; for ring-opening step in the catalytic mechanism. Catalysis depends on Glu-143, which acts as the For ring-opening step.

The protein belongs to the glucosamine/galactosamine-6-phosphate isomerase family. NagB subfamily. In terms of assembly, homohexamer.

The enzyme catalyses alpha-D-glucosamine 6-phosphate + H2O = beta-D-fructose 6-phosphate + NH4(+). It participates in amino-sugar metabolism; N-acetylneuraminate degradation; D-fructose 6-phosphate from N-acetylneuraminate: step 5/5. Functionally, catalyzes the reversible isomerization-deamination of glucosamine 6-phosphate (GlcN6P) to form fructose 6-phosphate (Fru6P) and ammonium ion. The sequence is that of Glucosamine-6-phosphate deaminase from Cellvibrio japonicus (strain Ueda107) (Pseudomonas fluorescens subsp. cellulosa).